A 121-amino-acid polypeptide reads, in one-letter code: Large ribosomal subunit protein uL18 (121 aa).

A compositionally biased stretch (basic residues) spans 1–22 (MIKKPDKKTLRQGKHKRVRRKV). Positions 1-23 (MIKKPDKKTLRQGKHKRVRRKVA) are disordered.

Belongs to the universal ribosomal protein uL18 family. As to quaternary structure, part of the 50S ribosomal subunit; part of the 5S rRNA/L5/L18/L25 subcomplex. Contacts the 5S and 23S rRNAs.

This is one of the proteins that bind and probably mediate the attachment of the 5S RNA into the large ribosomal subunit, where it forms part of the central protuberance. In Syntrophomonas wolfei subsp. wolfei (strain DSM 2245B / Goettingen), this protein is Large ribosomal subunit protein uL18.